Here is a 197-residue protein sequence, read N- to C-terminus: MAIVPIRIVGDPVLHTPTQPVPVGPDGSLPDDLPELIANMYETMDAANGVGLAANQIGVPLRLFVYDCAETRGGGTRHRGVVINPVLETSEIPETMPDPDDDEEGCLSVPGESFPTGRAGWARVTGLDADGKEVTLEGNDLFARMLQHETGHLDGFLYIDKLIGRNARAAKRAVKSNGWGVPGLSWTPGQVADPFGH.

Residues C106 and H148 each contribute to the Fe cation site. Residue E149 is part of the active site. H152 contributes to the Fe cation binding site.

Belongs to the polypeptide deformylase family. Fe(2+) serves as cofactor.

The catalysed reaction is N-terminal N-formyl-L-methionyl-[peptide] + H2O = N-terminal L-methionyl-[peptide] + formate. Functionally, removes the formyl group from the N-terminal Met of newly synthesized proteins. Requires at least a dipeptide for an efficient rate of reaction. N-terminal L-methionine is a prerequisite for activity but the enzyme has broad specificity at other positions. The chain is Peptide deformylase from Mycobacteroides abscessus (strain ATCC 19977 / DSM 44196 / CCUG 20993 / CIP 104536 / JCM 13569 / NCTC 13031 / TMC 1543 / L948) (Mycobacterium abscessus).